Consider the following 237-residue polypeptide: Ribonuclease 3 (237 aa).

Residues 3–133 enclose the RNase III domain; it reads SRQPLLDALG…LLGAIYLQHG (131 aa). E43 provides a ligand contact to Mg(2+). Residue D47 is part of the active site. Residues D119 and E122 each contribute to the Mg(2+) site. The active site involves E122. A DRBM domain is found at 160-228; sequence DWKTSLQELT…AAATWKALDV (69 aa).

It belongs to the ribonuclease III family. As to quaternary structure, homodimer. It depends on Mg(2+) as a cofactor.

It localises to the cytoplasm. It carries out the reaction Endonucleolytic cleavage to 5'-phosphomonoester.. Its function is as follows. Digests double-stranded RNA. Involved in the processing of primary rRNA transcript to yield the immediate precursors to the large and small rRNAs (23S and 16S). Processes some mRNAs, and tRNAs when they are encoded in the rRNA operon. Processes pre-crRNA and tracrRNA of type II CRISPR loci if present in the organism. This is Ribonuclease 3 from Mycolicibacterium paratuberculosis (strain ATCC BAA-968 / K-10) (Mycobacterium paratuberculosis).